A 353-amino-acid chain; its full sequence is Protein AC18 (353 aa).

It localises to the host nucleus. The protein localises to the host cytoplasm. In terms of biological role, may play a role in occlusion-derived virions (ODV) formation and/or regulation of late viral gene expression. In Autographa californica nuclear polyhedrosis virus (AcMNPV), this protein is Protein AC18 (DA41).